A 364-amino-acid chain; its full sequence is tRNA/tmRNA (uracil-C(5))-methyltransferase (364 aa).

Residues glutamine 188, tyrosine 216, asparagine 221, glutamate 237, and aspartate 297 each contribute to the S-adenosyl-L-methionine site. The active-site Nucleophile is cysteine 322. Residue glutamate 356 is the Proton acceptor of the active site.

This sequence belongs to the class I-like SAM-binding methyltransferase superfamily. RNA M5U methyltransferase family. TrmA subfamily.

It catalyses the reaction uridine(54) in tRNA + S-adenosyl-L-methionine = 5-methyluridine(54) in tRNA + S-adenosyl-L-homocysteine + H(+). The enzyme catalyses uridine(341) in tmRNA + S-adenosyl-L-methionine = 5-methyluridine(341) in tmRNA + S-adenosyl-L-homocysteine + H(+). Dual-specificity methyltransferase that catalyzes the formation of 5-methyluridine at position 54 (m5U54) in all tRNAs, and that of position 341 (m5U341) in tmRNA (transfer-mRNA). In Colwellia psychrerythraea (strain 34H / ATCC BAA-681) (Vibrio psychroerythus), this protein is tRNA/tmRNA (uracil-C(5))-methyltransferase.